Consider the following 1052-residue polypeptide: P3N-PIPO polyprotein (1052 aa).

A Peptidase S30 domain is found at 219 to 362 (KMSDQGVDML…KTMSLKIVHF (144 aa)). Residues H270, D279, and S313 each act as for P1 proteinase activity in the active site. The short motif at 414–417 (KITC) is the Involved in interaction with stylet and aphid transmission element. An Involved in virions binding and aphid transmission motif is present at residues 672–674 (PTK). The region spanning 698–820 (MYIAKEGYCY…ESSLKHYRVG (123 aa)) is the Peptidase C6 domain. Residues C706 and H779 each act as for helper component proteinase activity in the active site.

Belongs to the potyviridae P3N-PIPO polyprotein family. Interacts (via PIPO domain) with host PCaP1 protein; this interaction may help to anchor the movement complex to the plasma membrane from which the complex could move to the plasmodesmata. Potyviral RNA is expressed as two polyproteins which undergo post-translational proteolytic processing. Genome polyprotein is processed by NIa-pro, P1 and HC-pro proteinases resulting in the production of at least ten individual proteins. P3N-PIPO is cleaved by P1 and HC-pro proteinases resulting in the production of three individual proteins. The P1 proteinase and the HC-pro cleave only their respective C-termini autocatalytically.

The protein localises to the host cell junction. The protein resides in the host plasmodesma. It catalyses the reaction Hydrolyzes a Gly-|-Gly bond at its own C-terminus, commonly in the sequence -Tyr-Xaa-Val-Gly-|-Gly, in the processing of the potyviral polyprotein.. Its function is as follows. Required for aphid transmission and also has proteolytic activity. Only cleaves a Gly-Gly dipeptide at its own C-terminus. Interacts with virions and aphid stylets. Acts as a suppressor of RNA-mediated gene silencing, also known as post-transcriptional gene silencing (PTGS), a mechanism of plant viral defense that limits the accumulation of viral RNAs. May have RNA-binding activity. In terms of biological role, allows efficient cell to cell propagation, by bypassing the host cell wall barrier. Transports viral genome to neighboring plant cells directly through plasmosdesmata, without any budding. This chain is P3N-PIPO polyprotein, found in Turnip mosaic virus (strain Quebec) (TuMV).